The sequence spans 418 residues: Serine/threonine transporter SstT (418 aa).

9 helical membrane-spanning segments follow: residues 16 to 36 (SLVSQILIGMIVGILLATLIP), 45 to 65 (LGTLFVGALKAVAPVLVLLLV), 83 to 103 (LLILYLFGTFCAAVVAVVASF), 142 to 162 (ALLEGNYIGILAWAIALGLSL), 192 to 212 (PLGIMGLVASTFAETGFSALL), 218 to 238 (LIVLIGCMLFVAFVVNPLIVF), 289 to 309 (VSIPLGATINMAGAAITITVL), 317 to 337 (LGISVDLATAVLLSVVATISA), and 364 to 384 (VAMQVVAVGFIIGVLQDSAET).

The protein belongs to the dicarboxylate/amino acid:cation symporter (DAACS) (TC 2.A.23) family.

The protein resides in the cell inner membrane. It catalyses the reaction L-serine(in) + Na(+)(in) = L-serine(out) + Na(+)(out). The enzyme catalyses L-threonine(in) + Na(+)(in) = L-threonine(out) + Na(+)(out). Involved in the import of serine and threonine into the cell, with the concomitant import of sodium (symport system). This chain is Serine/threonine transporter SstT, found in Tolumonas auensis (strain DSM 9187 / NBRC 110442 / TA 4).